The chain runs to 430 residues: Hydrogenobyrinate a,c-diamide synthase (430 aa).

The GATase cobBQ-type domain maps to Arg239 to Leu422. The active-site Nucleophile is Cys321.

The protein belongs to the CobB/CbiA family. It depends on Mg(2+) as a cofactor.

The enzyme catalyses hydrogenobyrinate + 2 L-glutamine + 2 ATP + 2 H2O = hydrogenobyrinate a,c-diamide + 2 L-glutamate + 2 ADP + 2 phosphate + 2 H(+). It participates in cofactor biosynthesis; adenosylcobalamin biosynthesis; cob(II)yrinate a,c-diamide from precorrin-2 (aerobic route): step 9/10. Catalyzes the ATP-dependent amidation of the two carboxylate groups at positions a and c of hydrogenobyrinate, using either L-glutamine or ammonia as the nitrogen source. In Stutzerimonas stutzeri (strain A1501) (Pseudomonas stutzeri), this protein is Hydrogenobyrinate a,c-diamide synthase.